The primary structure comprises 149 residues: Putative pre-16S rRNA nuclease (149 aa).

Belongs to the YqgF nuclease family.

It localises to the cytoplasm. Its function is as follows. Could be a nuclease involved in processing of the 5'-end of pre-16S rRNA. This Synechococcus sp. (strain ATCC 27144 / PCC 6301 / SAUG 1402/1) (Anacystis nidulans) protein is Putative pre-16S rRNA nuclease.